The primary structure comprises 230 residues: Large ribosomal subunit protein uL1 (230 aa).

Belongs to the universal ribosomal protein uL1 family. As to quaternary structure, part of the 50S ribosomal subunit.

In terms of biological role, binds directly to 23S rRNA. The L1 stalk is quite mobile in the ribosome, and is involved in E site tRNA release. Functionally, protein L1 is also a translational repressor protein, it controls the translation of the L11 operon by binding to its mRNA. The sequence is that of Large ribosomal subunit protein uL1 from Leptospira borgpetersenii serovar Hardjo-bovis (strain JB197).